The sequence spans 437 residues: Asparagine--tRNA ligase (437 aa).

It belongs to the class-II aminoacyl-tRNA synthetase family. Homodimer.

It is found in the cytoplasm. The catalysed reaction is tRNA(Asn) + L-asparagine + ATP = L-asparaginyl-tRNA(Asn) + AMP + diphosphate + H(+). This chain is Asparagine--tRNA ligase, found in Symbiobacterium thermophilum (strain DSM 24528 / JCM 14929 / IAM 14863 / T).